The chain runs to 364 residues: Autophagy-related protein 14 (364 aa).

The tract at residues 5–20 (CPICETQSHVFYCAHC) is cysteine repeats. A coiled-coil region spans residues 38 to 114 (LGKINNALRN…QDRRIKEKSR (77 aa)).

The protein belongs to the ATG14 family. Component of the autophagy-specific VPS34 PI3-kinase complex I composed of VPS15, VPS30, VPS34, ATG14 and ATG38. Interacts directly with ATG38.

Its subcellular location is the preautophagosomal structure membrane. It localises to the vacuole membrane. Its function is as follows. Required for cytoplasm to vacuole transport (Cvt) and autophagy as a part of the autophagy-specific VPS34 PI3-kinase complex I. This complex is essential to recruit the ATG8-phosphatidylinositol conjugate and the ATG12-ATG5 conjugate to the pre-autophagosomal structure. ATG14 mediates the specific binding of the VPS34 PI3-kinase complex I to the preautophagosomal structure (PAS). Required for survival and/or proliferation in kidneys and in brain. This chain is Autophagy-related protein 14, found in Candida glabrata (strain ATCC 2001 / BCRC 20586 / JCM 3761 / NBRC 0622 / NRRL Y-65 / CBS 138) (Yeast).